A 356-amino-acid polypeptide reads, in one-letter code: Alternative oxidase, mitochondrial (356 aa).

A helical transmembrane segment spans residues 152-172 (VIRFIFLETVAGVPGMVGGML). Glutamate 159, glutamate 198, and histidine 201 together coordinate Fe cation. Residues 217-237 (LMVLGAQGVFFNGFFISYLIS) form a helical membrane-spanning segment. Glutamate 249, glutamate 304, and histidine 307 together coordinate Fe cation. Residues 330–356 (YDNPEAPHPTKSAEIVKPTGWERDEVI) form a disordered region.

This sequence belongs to the alternative oxidase family. It depends on Fe cation as a cofactor.

The protein localises to the mitochondrion inner membrane. Functionally, catalyzes cyanide-resistant oxygen consumption. May increase respiration when the cytochrome respiratory pathway is restricted, or in response to low temperatures. The sequence is that of Alternative oxidase, mitochondrial (AOX1) from Ajellomyces capsulatus (Darling's disease fungus).